A 93-amino-acid chain; its full sequence is Protein NONRESPONDING TO OXYLIPINS 2, mitochondrial (93 aa).

Residues 1-27 constitute a mitochondrion transit peptide; the sequence is MASRCRSLSKPAFSAFRSAMNKPSIRP.

Expressed in cotyledons, roots and flowers.

The protein localises to the mitochondrion. In terms of biological role, essential for mitochondrial morphology, functionality and distribution. Contributes to 9-lipoxygenase (9-LOX)-derived oxylipin synthesis, but not to brassinosteroids (BRs) signaling. Required for waving-inducing oxylipin 9-hydroxyoctadecatrienoic acid and derivatives (e.g. 9-HOT, 2-HOE, 13-HOT, 13-HOD, 13-KOD, 12,13-KHOD, 9-HOT, 9-HOD, 9-KOT, 9-KOD and 9,10-KHOE)-mediated root development regulation, including callose deposition, root waving and lateral roots formation. Involved in basal plant defense toward pathogenic bacteria (e.g. Pseudomonas syringae pv tomato), both in compatible (e.g. Pst DC3000) and incompatible (e.g. Pst DC3000 avrRPM1) interactions, as well as against obligate biotrophic pathogenic fungi (e.g. Golovinomyces cichoracearum), probably via the promotion of callose deposition in the cell wall. Confers sensitivity to the herbicide isoxaben, a herbicide inhibiting cellulose synthesis and altering the cell wall. The protein is Protein NONRESPONDING TO OXYLIPINS 2, mitochondrial of Arabidopsis thaliana (Mouse-ear cress).